The primary structure comprises 428 residues: Bifunctional IPC transferase and DIPP synthase (428 aa).

Residues 2–227 (VETAVILAGG…KAKKYLVKTA (226 aa)) are mobA-like NTP transferase. CTP-binding positions include 8-10 (LAG), Lys25, Glu80, and Glu116. Glu116 is a binding site for Mg(2+). Positions 228–425 (IKGVGDGFIS…LTIYLVWKKK (198 aa)) are CDP-alcohol phosphatidyltransferases. The next 3 membrane-spanning stretches (helical) occupy residues 266–286 (FLLG…GGIL), 336–356 (PSWD…MVSY), and 389–409 (MIMI…LAII).

This sequence in the N-terminal section; belongs to the MobA family. The protein in the C-terminal section; belongs to the CDP-alcohol phosphatidyltransferase class-I family. It depends on Mg(2+) as a cofactor.

The protein resides in the membrane. It carries out the reaction 1D-myo-inositol 3-phosphate + CTP + H(+) = CDP-1L-myo-inositol + diphosphate. The enzyme catalyses CDP-1L-myo-inositol + 1D-myo-inositol 3-phosphate = bis(1L-myo-inositol) 3,1'-phosphate 1-phosphate + CMP + H(+). Its function is as follows. Involved in biosynthesis of di-myo-inositol phosphate (DIP), a widespread organic solute in microorganisms adapted to hot environments. Catalyzes the condensation of CTP and L-myo-inositol-1-phosphate into CDP-L-myo-inositol, as well as the biosynthesis of di-myo-inositol-1,3'-phosphate-1'-phosphate (DIPP) from CDP-L-myo-inositol and L-myo-inositol-1-phosphate. The protein is Bifunctional IPC transferase and DIPP synthase (spsI) of Aquifex aeolicus (strain VF5).